A 633-amino-acid chain; its full sequence is DNA mismatch repair protein MutL (633 aa).

It belongs to the DNA mismatch repair MutL/HexB family.

In terms of biological role, this protein is involved in the repair of mismatches in DNA. It is required for dam-dependent methyl-directed DNA mismatch repair. May act as a 'molecular matchmaker', a protein that promotes the formation of a stable complex between two or more DNA-binding proteins in an ATP-dependent manner without itself being part of a final effector complex. This is DNA mismatch repair protein MutL from Macrococcus caseolyticus (strain JCSC5402) (Macrococcoides caseolyticum).